The sequence spans 190 residues: Xanthine phosphoribosyltransferase (190 aa).

Positions 20 and 27 each coordinate xanthine. 129–133 is a 5-phospho-alpha-D-ribose 1-diphosphate binding site; sequence ASGSA. Residue Lys157 participates in xanthine binding.

It belongs to the purine/pyrimidine phosphoribosyltransferase family. Xpt subfamily. As to quaternary structure, homodimer.

The protein localises to the cytoplasm. The enzyme catalyses XMP + diphosphate = xanthine + 5-phospho-alpha-D-ribose 1-diphosphate. The protein operates within purine metabolism; XMP biosynthesis via salvage pathway; XMP from xanthine: step 1/1. Functionally, converts the preformed base xanthine, a product of nucleic acid breakdown, to xanthosine 5'-monophosphate (XMP), so it can be reused for RNA or DNA synthesis. The protein is Xanthine phosphoribosyltransferase of Clostridium tetani (strain Massachusetts / E88).